Reading from the N-terminus, the 231-residue chain is ATP-dependent dethiobiotin synthetase BioD (231 aa).

Glutamate 12–valine 17 is an ATP binding site. Threonine 16 contributes to the Mg(2+) binding site. The active site involves lysine 37. Serine 41 lines the substrate pocket. Residues aspartate 51, glutamate 112–glycine 115, and proline 202–leucine 204 contribute to the ATP site. Mg(2+) contacts are provided by aspartate 51 and glutamate 112.

The protein belongs to the dethiobiotin synthetase family. As to quaternary structure, homodimer. Requires Mg(2+) as cofactor.

Its subcellular location is the cytoplasm. It carries out the reaction (7R,8S)-7,8-diammoniononanoate + CO2 + ATP = (4R,5S)-dethiobiotin + ADP + phosphate + 3 H(+). The protein operates within cofactor biosynthesis; biotin biosynthesis; biotin from 7,8-diaminononanoate: step 1/2. Functionally, catalyzes a mechanistically unusual reaction, the ATP-dependent insertion of CO2 between the N7 and N8 nitrogen atoms of 7,8-diaminopelargonic acid (DAPA, also called 7,8-diammoniononanoate) to form a ureido ring. This is ATP-dependent dethiobiotin synthetase BioD from Bacillus subtilis subsp. natto.